We begin with the raw amino-acid sequence, 142 residues long: MRHYETMFILKPTLVEEEIKSKIEFYKEVITKHHGVIETSLDMGMRNLAYEIKKHKRGYYYVAYFKANPSMILELERLYRINEDVLRFIVIKYESKKEVEAWHALVDRANKKPSHAKEKHEKTEHTHSHHTEETESVGSHSK.

Residues 110-133 (NKKPSHAKEKHEKTEHTHSHHTEE) are compositionally biased toward basic and acidic residues. The disordered stretch occupies residues 110–142 (NKKPSHAKEKHEKTEHTHSHHTEETESVGSHSK).

Belongs to the bacterial ribosomal protein bS6 family.

Functionally, binds together with bS18 to 16S ribosomal RNA. The sequence is that of Small ribosomal subunit protein bS6 from Helicobacter pylori (strain Shi470).